The sequence spans 135 residues: Glutaredoxin-C5 (135 aa).

Residues A29 to W134 enclose the Glutaredoxin domain. An intrachain disulfide couples C49 to C52. The Responsive for interaction with TGA factors signature appears at A132–L135.

It belongs to the glutaredoxin family. CC-type subfamily.

It is found in the cytoplasm. Its subcellular location is the nucleus. Its function is as follows. Has a glutathione-disulfide oxidoreductase activity in the presence of NADPH and glutathione reductase. Reduces low molecular weight disulfides and proteins. The chain is Glutaredoxin-C5 (GRXC5) from Oryza sativa subsp. japonica (Rice).